The primary structure comprises 472 residues: Probable diguanylate cyclase DgcF (472 aa).

8 consecutive transmembrane segments (helical) span residues 21–41, 44–64, 90–110, 128–148, 167–187, 198–218, 237–257, and 273–293; these read SIAI…LRLV, LSLF…YVWL, VSLA…LLVV, LFNY…IGSV, FSTG…GVLP, IALI…SLAF, LLTF…VIDI, and LGIA…AAIN. One can recognise a GGDEF domain in the interval 330–467; the sequence is QHLTVMLLDI…GRNRTSTMRY (138 aa). Mg(2+) is bound by residues Asp338 and Ile339. Residues Asn346, His351, and Asp355 each contribute to the substrate site. Glu381 contacts Mg(2+).

In terms of assembly, homodimer. Mg(2+) serves as cofactor.

Its subcellular location is the cell membrane. It catalyses the reaction 2 GTP = 3',3'-c-di-GMP + 2 diphosphate. The protein operates within purine metabolism; 3',5'-cyclic di-GMP biosynthesis. Catalyzes the synthesis of cyclic-di-GMP (c-di-GMP) via the condensation of 2 GTP molecules. This is Probable diguanylate cyclase DgcF from Escherichia coli O157:H7.